A 711-amino-acid polypeptide reads, in one-letter code: 1,4-alpha-glucan branching enzyme GlgB (711 aa).

Asp392 serves as the catalytic Nucleophile. Glu443 acts as the Proton donor in catalysis.

Belongs to the glycosyl hydrolase 13 family. GlgB subfamily. In terms of assembly, monomer.

The enzyme catalyses Transfers a segment of a (1-&gt;4)-alpha-D-glucan chain to a primary hydroxy group in a similar glucan chain.. It functions in the pathway glycan biosynthesis; glycogen biosynthesis. Catalyzes the formation of the alpha-1,6-glucosidic linkages in glycogen by scission of a 1,4-alpha-linked oligosaccharide from growing alpha-1,4-glucan chains and the subsequent attachment of the oligosaccharide to the alpha-1,6 position. The protein is 1,4-alpha-glucan branching enzyme GlgB of Corynebacterium jeikeium (strain K411).